Here is a 138-residue protein sequence, read N- to C-terminus: Small ribosomal subunit protein uS11c (138 aa).

Residues 1-23 (MKKPIPRIGSRRNGRIGSRKNGR) are disordered.

It belongs to the universal ribosomal protein uS11 family. In terms of assembly, part of the 30S ribosomal subunit.

The protein resides in the plastid. It is found in the chloroplast. The chain is Small ribosomal subunit protein uS11c from Amborella trichopoda.